The primary structure comprises 1270 residues: DNA-directed RNA polymerase subunit beta (1270 aa).

The protein belongs to the RNA polymerase beta chain family. As to quaternary structure, the RNAP catalytic core consists of 2 alpha, 1 beta, 1 beta' and 1 omega subunit. When a sigma factor is associated with the core the holoenzyme is formed, which can initiate transcription.

The enzyme catalyses RNA(n) + a ribonucleoside 5'-triphosphate = RNA(n+1) + diphosphate. DNA-dependent RNA polymerase catalyzes the transcription of DNA into RNA using the four ribonucleoside triphosphates as substrates. This is DNA-directed RNA polymerase subunit beta from Porphyromonas cangingivalis.